A 301-amino-acid polypeptide reads, in one-letter code: Protoheme IX farnesyltransferase (301 aa).

The next 8 helical transmembrane spans lie at Val-25–Val-45, Trp-47–Ile-67, Ile-97–Asn-117, Leu-119–Leu-139, Ile-147–Gly-167, Ala-173–Leu-193, Phe-235–Phe-255, and Ile-279–Ile-299.

This sequence belongs to the UbiA prenyltransferase family. Protoheme IX farnesyltransferase subfamily.

Its subcellular location is the cell inner membrane. It carries out the reaction heme b + (2E,6E)-farnesyl diphosphate + H2O = Fe(II)-heme o + diphosphate. The protein operates within porphyrin-containing compound metabolism; heme O biosynthesis; heme O from protoheme: step 1/1. Its function is as follows. Converts heme B (protoheme IX) to heme O by substitution of the vinyl group on carbon 2 of heme B porphyrin ring with a hydroxyethyl farnesyl side group. This is Protoheme IX farnesyltransferase from Paraburkholderia xenovorans (strain LB400).